Here is a 240-residue protein sequence, read N- to C-terminus: UDP-2,3-diacylglucosamine hydrolase (240 aa).

Residues Asp-8, His-10, Asp-41, Asn-79, and His-114 each coordinate Mn(2+). Asn-79 to Arg-80 contacts substrate. Residues Asp-122, Ser-160, Asn-164, Lys-167, and His-195 each coordinate substrate. Mn(2+)-binding residues include His-195 and His-197.

It belongs to the LpxH family. Requires Mn(2+) as cofactor.

It is found in the cell inner membrane. The catalysed reaction is UDP-2-N,3-O-bis[(3R)-3-hydroxytetradecanoyl]-alpha-D-glucosamine + H2O = 2-N,3-O-bis[(3R)-3-hydroxytetradecanoyl]-alpha-D-glucosaminyl 1-phosphate + UMP + 2 H(+). It participates in glycolipid biosynthesis; lipid IV(A) biosynthesis; lipid IV(A) from (3R)-3-hydroxytetradecanoyl-[acyl-carrier-protein] and UDP-N-acetyl-alpha-D-glucosamine: step 4/6. In terms of biological role, hydrolyzes the pyrophosphate bond of UDP-2,3-diacylglucosamine to yield 2,3-diacylglucosamine 1-phosphate (lipid X) and UMP by catalyzing the attack of water at the alpha-P atom. Involved in the biosynthesis of lipid A, a phosphorylated glycolipid that anchors the lipopolysaccharide to the outer membrane of the cell. The protein is UDP-2,3-diacylglucosamine hydrolase of Salmonella schwarzengrund (strain CVM19633).